A 116-amino-acid chain; its full sequence is Large ribosomal subunit protein uL18 (116 aa).

The protein belongs to the universal ribosomal protein uL18 family. Part of the 50S ribosomal subunit; part of the 5S rRNA/L5/L18/L25 subcomplex. Contacts the 5S and 23S rRNAs.

Functionally, this is one of the proteins that bind and probably mediate the attachment of the 5S RNA into the large ribosomal subunit, where it forms part of the central protuberance. The sequence is that of Large ribosomal subunit protein uL18 from Saccharophagus degradans (strain 2-40 / ATCC 43961 / DSM 17024).